The sequence spans 70 residues: Turripeptide OL179 (70 aa).

The first 21 residues, 1–21 (MMAKQVVVLLALLLLLPIVTA), serve as a signal peptide directing secretion. Residues 22-32 (SMGDASGRTGR) constitute a propeptide that is removed on maturation.

In terms of tissue distribution, expressed by the venom duct.

The protein resides in the secreted. In terms of biological role, acts as a neurotoxin by inhibiting an ion channel. The sequence is that of Turripeptide OL179 from Iotyrris olangoensis (Sea snail).